We begin with the raw amino-acid sequence, 22 residues long: 50 kDa cell wall protein (22 aa).

It is found in the secreted. Its subcellular location is the cell wall. This is 50 kDa cell wall protein from Nicotiana tabacum (Common tobacco).